A 252-amino-acid chain; its full sequence is Cysteine-rich repeat secretory protein 38 (252 aa).

An N-terminal signal peptide occupies residues 1–27 (MSSLKRIVWFPILAIAIQILSIHTVLS). 2 Gnk2-homologous domains span residues 34-136 (FLFH…STNF) and 142-248 (FENR…IYPF).

The protein belongs to the cysteine-rich repeat secretory protein family.

It is found in the secreted. This chain is Cysteine-rich repeat secretory protein 38 (CRRSP38), found in Arabidopsis thaliana (Mouse-ear cress).